We begin with the raw amino-acid sequence, 61 residues long: Large ribosomal subunit protein uL30 (61 aa).

The protein belongs to the universal ribosomal protein uL30 family. As to quaternary structure, part of the 50S ribosomal subunit.

The protein is Large ribosomal subunit protein uL30 of Bordetella petrii (strain ATCC BAA-461 / DSM 12804 / CCUG 43448).